The following is a 247-amino-acid chain: MSHDPDRLFAQPLARVQDFVFNEDVARVFPDMIKRSVPGYPTIVENIGVIAAQFAQPNTRLYDLGCSLGAVTQALRRHVSQDNCQVIAVDNSTAMVERCREYLHAQDSMYQELLPVEVLEADILALEFQSSSLVALNFTLQFIAPEQRPALLGRIRQALVPGGALILSEKLRFEDDEEQQLLTDLHIAFKRANGYSELEIAQKRSAIENVMKPDSLETHRQRLLEAGFSKVVPWFQCLNFASLIALP.

Residues Tyr40, 65–67 (GCS), 90–91 (DN), 122–123 (DI), Asn137, and Arg204 contribute to the S-adenosyl-L-methionine site.

It belongs to the class I-like SAM-binding methyltransferase superfamily. Cx-SAM synthase family. Homodimer.

The enzyme catalyses prephenate + S-adenosyl-L-methionine = carboxy-S-adenosyl-L-methionine + 3-phenylpyruvate + H2O. Functionally, catalyzes the conversion of S-adenosyl-L-methionine (SAM) to carboxy-S-adenosyl-L-methionine (Cx-SAM). The sequence is that of Carboxy-S-adenosyl-L-methionine synthase from Stutzerimonas stutzeri (strain A1501) (Pseudomonas stutzeri).